Consider the following 194-residue polypeptide: Imidazoleglycerol-phosphate dehydratase (194 aa).

It belongs to the imidazoleglycerol-phosphate dehydratase family.

It is found in the cytoplasm. It carries out the reaction D-erythro-1-(imidazol-4-yl)glycerol 3-phosphate = 3-(imidazol-4-yl)-2-oxopropyl phosphate + H2O. It participates in amino-acid biosynthesis; L-histidine biosynthesis; L-histidine from 5-phospho-alpha-D-ribose 1-diphosphate: step 6/9. This is Imidazoleglycerol-phosphate dehydratase from Caldicellulosiruptor bescii (strain ATCC BAA-1888 / DSM 6725 / KCTC 15123 / Z-1320) (Anaerocellum thermophilum).